Consider the following 268-residue polypeptide: Octanoyltransferase (268 aa).

Positions 73–261 (GEADELVWLL…AFEEVFGPAV (189 aa)) constitute a BPL/LPL catalytic domain. Residues 112–119 (RGGEYTYH), 192–194 (ALG), and 205–207 (GLS) each bind substrate. The active-site Acyl-thioester intermediate is the C223.

This sequence belongs to the LipB family.

It is found in the cytoplasm. The enzyme catalyses octanoyl-[ACP] + L-lysyl-[protein] = N(6)-octanoyl-L-lysyl-[protein] + holo-[ACP] + H(+). Its pathway is protein modification; protein lipoylation via endogenous pathway; protein N(6)-(lipoyl)lysine from octanoyl-[acyl-carrier-protein]: step 1/2. In terms of biological role, catalyzes the transfer of endogenously produced octanoic acid from octanoyl-acyl-carrier-protein onto the lipoyl domains of lipoate-dependent enzymes. Lipoyl-ACP can also act as a substrate although octanoyl-ACP is likely to be the physiological substrate. The polypeptide is Octanoyltransferase (Agrobacterium fabrum (strain C58 / ATCC 33970) (Agrobacterium tumefaciens (strain C58))).